A 428-amino-acid chain; its full sequence is GTPase Obg (428 aa).

An Obg domain is found at 1 to 158 (MFVDQTKIDV…RTLRLELKVL (158 aa)). Residues 159–328 (ADVGLVGFPS…LMGKTADLVE (170 aa)) form the OBG-type G domain. GTP contacts are provided by residues 165–172 (GFPSVGKS), 190–194 (FTTLT), 212–215 (DLPG), 282–285 (TQMD), and 309–311 (SSV). Mg(2+)-binding residues include Ser-172 and Thr-192. Positions 350–428 (YKKPEDDGFK…IADFTFEFVD (79 aa)) constitute an OCT domain.

Belongs to the TRAFAC class OBG-HflX-like GTPase superfamily. OBG GTPase family. Monomer. It depends on Mg(2+) as a cofactor.

The protein localises to the cytoplasm. Its function is as follows. An essential GTPase which binds GTP, GDP and possibly (p)ppGpp with moderate affinity, with high nucleotide exchange rates and a fairly low GTP hydrolysis rate. Plays a role in control of the cell cycle, stress response, ribosome biogenesis and in those bacteria that undergo differentiation, in morphogenesis control. This Lactobacillus gasseri (strain ATCC 33323 / DSM 20243 / BCRC 14619 / CIP 102991 / JCM 1131 / KCTC 3163 / NCIMB 11718 / NCTC 13722 / AM63) protein is GTPase Obg.